The following is a 901-amino-acid chain: Protein translocase subunit SecA (901 aa).

ATP is bound by residues glutamine 87, 105 to 109 (GEGKT), and aspartate 512. A disordered region spans residues 853 to 901 (QMQQLSHQTDENEAAEAIAAQTGDRKVGRNDPCPCGSGKKYKSCHGRLS). Positions 885, 887, 896, and 897 each coordinate Zn(2+). The span at 891-901 (KKYKSCHGRLS) shows a compositional bias: basic residues.

Belongs to the SecA family. As to quaternary structure, monomer and homodimer. Part of the essential Sec protein translocation apparatus which comprises SecA, SecYEG and auxiliary proteins SecDF-YajC and YidC. Zn(2+) is required as a cofactor.

The protein localises to the cell inner membrane. The protein resides in the cytoplasm. The catalysed reaction is ATP + H2O + cellular proteinSide 1 = ADP + phosphate + cellular proteinSide 2.. In terms of biological role, part of the Sec protein translocase complex. Interacts with the SecYEG preprotein conducting channel. Has a central role in coupling the hydrolysis of ATP to the transfer of proteins into and across the cell membrane, serving both as a receptor for the preprotein-SecB complex and as an ATP-driven molecular motor driving the stepwise translocation of polypeptide chains across the membrane. This chain is Protein translocase subunit SecA, found in Enterobacter sp. (strain 638).